Consider the following 122-residue polypeptide: Fluoride-specific ion channel FluC (122 aa).

4 helical membrane passes run 4-24 (LLIA…GTAI), 34-54 (IGTM…MTLL), 66-86 (LALV…EWET), and 95-115 (FWIG…AVWF). Na(+) is bound by residues Gly-74 and Thr-77.

Belongs to the fluoride channel Fluc/FEX (TC 1.A.43) family.

The protein localises to the cell inner membrane. The enzyme catalyses fluoride(in) = fluoride(out). Its activity is regulated as follows. Na(+) is not transported, but it plays an essential structural role and its presence is essential for fluoride channel function. Fluoride-specific ion channel. Important for reducing fluoride concentration in the cell, thus reducing its toxicity. This chain is Fluoride-specific ion channel FluC, found in Solibacter usitatus (strain Ellin6076).